The primary structure comprises 144 residues: Mannitol-specific phosphotransferase enzyme IIA component (144 aa).

In terms of domain architecture, PTS EIIA type-2 spans 3–142 (ELFSNDNIFL…EEIKQVFEEA (140 aa)). His-63 (tele-phosphohistidine intermediate) is an active-site residue. His-63 carries the post-translational modification Phosphohistidine; by HPr.

As to quaternary structure, homodimer or homotrimer. Seems to be a monomer when not phosphorylated.

The protein localises to the cytoplasm. Functionally, the phosphoenolpyruvate-dependent sugar phosphotransferase system (sugar PTS), a major carbohydrate active transport system, catalyzes the phosphorylation of incoming sugar substrates concomitantly with their translocation across the cell membrane. The enzyme II CmtAB PTS system is involved in D-mannitol transport. This Staphylococcus aureus (strain COL) protein is Mannitol-specific phosphotransferase enzyme IIA component (mtlF).